The following is a 591-amino-acid chain: Aspartate--tRNA ligase (591 aa).

Position 173 (Glu-173) interacts with L-aspartate. Residues Gln-197–Lys-200 form an aspartate region. L-aspartate is bound at residue Arg-219. ATP contacts are provided by residues Arg-219–Glu-221 and Gln-228. His-448 contacts L-aspartate. Glu-482 provides a ligand contact to ATP. Position 489 (Arg-489) interacts with L-aspartate. Residue Gly-534 to Arg-537 coordinates ATP.

Belongs to the class-II aminoacyl-tRNA synthetase family. Type 1 subfamily. In terms of assembly, homodimer.

Its subcellular location is the cytoplasm. The enzyme catalyses tRNA(Asp) + L-aspartate + ATP = L-aspartyl-tRNA(Asp) + AMP + diphosphate. Its function is as follows. Catalyzes the attachment of L-aspartate to tRNA(Asp) in a two-step reaction: L-aspartate is first activated by ATP to form Asp-AMP and then transferred to the acceptor end of tRNA(Asp). This chain is Aspartate--tRNA ligase, found in Shewanella sp. (strain ANA-3).